A 382-amino-acid polypeptide reads, in one-letter code: Mannitol-1-phosphate 5-dehydrogenase (382 aa).

4 to 15 serves as a coordination point for NAD(+); sequence AVHFGAGNIGRG.

It belongs to the mannitol dehydrogenase family.

The enzyme catalyses D-mannitol 1-phosphate + NAD(+) = beta-D-fructose 6-phosphate + NADH + H(+). This is Mannitol-1-phosphate 5-dehydrogenase from Vibrio vulnificus (strain YJ016).